The following is a 311-amino-acid chain: Fructose-1,6-bisphosphatase class 1 (311 aa).

Residues Glu-90, Asp-110, Leu-112, and Asp-113 each contribute to the Mg(2+) site. Substrate contacts are provided by residues 113–116 (DGSS), Tyr-221, and Lys-251. Glu-257 is a Mg(2+) binding site.

This sequence belongs to the FBPase class 1 family. Homotetramer. It depends on Mg(2+) as a cofactor.

The protein resides in the cytoplasm. It catalyses the reaction beta-D-fructose 1,6-bisphosphate + H2O = beta-D-fructose 6-phosphate + phosphate. Its pathway is carbohydrate biosynthesis; gluconeogenesis. This is Fructose-1,6-bisphosphatase class 1 from Methanospirillum hungatei JF-1 (strain ATCC 27890 / DSM 864 / NBRC 100397 / JF-1).